Reading from the N-terminus, the 140-residue chain is UPF0225 protein SAV_6631 (140 aa).

The segment at 1 to 22 (MSKSRRTRSTSRPTSRPQPASC) is disordered. Residues 10-19 (TSRPTSRPQP) are compositionally biased toward low complexity.

Belongs to the UPF0225 family.

The polypeptide is UPF0225 protein SAV_6631 (Streptomyces avermitilis (strain ATCC 31267 / DSM 46492 / JCM 5070 / NBRC 14893 / NCIMB 12804 / NRRL 8165 / MA-4680)).